We begin with the raw amino-acid sequence, 443 residues long: MPETMTPSEIVSELDKHIIGQQKAKKAVAVALRNRWRRQQVADPLRQEITPKNILMIGPTGVGKTEIARRLAKLADAPFIKIEATKFTEVGYVGRDVDTIVRDLAEMAVKQTRESEMKKVRAKAEDAAEDRLLDVLIPPPRDIGFAQPEEKDSNARQVFRKKLREGQLDDKEIELEVAAGMPGMDIMGPPGMEEMTEQIRSMFAGLGQGKKHRRKMKVHEAFKLLVEEEAGKLVNEEELKHKAIANVEQNGIVFLDEIDKITSRSEHGGGEVSRQGVQRDLLPLVEGTTVSTKYGMIKTDHILFIASGAFQLSKPSDLIPELQGRFPIRVELDSLSVDDFQAILTQTDASLTKQYQALMKTEDVELVFADDGIRRLAEIAFSVNEKVENIGARRLYTVMERLLEDLSFHAHKSSGETVTIDAAYVDSRLNELAGSEDLSRYVL.

Residues isoleucine 19, 61–66, aspartate 256, glutamate 321, and arginine 393 contribute to the ATP site; that span reads GVGKTE.

This sequence belongs to the ClpX chaperone family. HslU subfamily. In terms of assembly, a double ring-shaped homohexamer of HslV is capped on each side by a ring-shaped HslU homohexamer. The assembly of the HslU/HslV complex is dependent on binding of ATP.

The protein localises to the cytoplasm. ATPase subunit of a proteasome-like degradation complex; this subunit has chaperone activity. The binding of ATP and its subsequent hydrolysis by HslU are essential for unfolding of protein substrates subsequently hydrolyzed by HslV. HslU recognizes the N-terminal part of its protein substrates and unfolds these before they are guided to HslV for hydrolysis. The chain is ATP-dependent protease ATPase subunit HslU from Ralstonia nicotianae (strain ATCC BAA-1114 / GMI1000) (Ralstonia solanacearum).